Reading from the N-terminus, the 1180-residue chain is RecBCD enzyme subunit RecB (1180 aa).

Positions 1–852 are DNA-binding and helicase activity, interacts with RecC; sequence MITTIPKSIN…QSGKNHISTK (852 aa). In terms of domain architecture, UvrD-like helicase ATP-binding spans 3 to 448; sequence TTIPKSINVT…YFLDTNWRSS (446 aa). Position 24–31 (24–31) interacts with ATP; that stretch reads ASAGTGKT. The region spanning 478–745 is the UvrD-like helicase C-terminal domain; it reads SSRINKTTKF…KIVSIHKSKG (268 aa). The interval 905 to 1180 is nuclease activity, interacts with RecD and RecA; the sequence is NYNFTSYSQL…EIIKKLEQIF (276 aa). Mg(2+) is bound by residues His-964, Asp-1075, and Asp-1088. The active-site For nuclease activity is Asp-1088.

The protein belongs to the helicase family. UvrD subfamily. In terms of assembly, heterotrimer of RecB, RecC and RecD. All subunits contribute to DNA-binding. Interacts with RecA. Mg(2+) serves as cofactor.

It carries out the reaction Exonucleolytic cleavage (in the presence of ATP) in either 5'- to 3'- or 3'- to 5'-direction to yield 5'-phosphooligonucleotides.. The enzyme catalyses Couples ATP hydrolysis with the unwinding of duplex DNA by translocating in the 3'-5' direction.. The catalysed reaction is ATP + H2O = ADP + phosphate + H(+). Functionally, a helicase/nuclease that prepares dsDNA breaks (DSB) for recombinational DNA repair. Binds to DSBs and unwinds DNA via a highly rapid and processive ATP-dependent bidirectional helicase activity. Unwinds dsDNA until it encounters a Chi (crossover hotspot instigator) sequence from the 3' direction. Cuts ssDNA a few nucleotides 3' to the Chi site. The properties and activities of the enzyme are changed at Chi. The Chi-altered holoenzyme produces a long 3'-ssDNA overhang and facilitates RecA-binding to the ssDNA for homologous DNA recombination and repair. Holoenzyme degrades any linearized DNA that is unable to undergo homologous recombination. In the holoenzyme this subunit contributes ATPase, 3'-5' helicase, exonuclease activity and loads RecA onto ssDNA. The polypeptide is RecBCD enzyme subunit RecB (Buchnera aphidicola subsp. Baizongia pistaciae (strain Bp)).